The chain runs to 348 residues: Holliday junction branch migration complex subunit RuvB (348 aa).

Residues 4–184 (ADRLIAASGR…FGIVQRLEFY (181 aa)) form a large ATPase domain (RuvB-L) region. ATP-binding positions include isoleucine 23, arginine 24, glycine 65, lysine 68, threonine 69, threonine 70, 131-133 (EDF), arginine 174, tyrosine 184, and arginine 221. A Mg(2+)-binding site is contributed by threonine 69. Residues 185-255 (NDKDLSTIVS…VADMALNLLD (71 aa)) form a small ATPAse domain (RuvB-S) region. The interval 258-348 (ERGFDHSDRR…GGDFSEPGDE (91 aa)) is head domain (RuvB-H). DNA contacts are provided by arginine 294, arginine 313, and arginine 318.

Belongs to the RuvB family. Homohexamer. Forms an RuvA(8)-RuvB(12)-Holliday junction (HJ) complex. HJ DNA is sandwiched between 2 RuvA tetramers; dsDNA enters through RuvA and exits via RuvB. An RuvB hexamer assembles on each DNA strand where it exits the tetramer. Each RuvB hexamer is contacted by two RuvA subunits (via domain III) on 2 adjacent RuvB subunits; this complex drives branch migration. In the full resolvosome a probable DNA-RuvA(4)-RuvB(12)-RuvC(2) complex forms which resolves the HJ.

The protein localises to the cytoplasm. The enzyme catalyses ATP + H2O = ADP + phosphate + H(+). Its function is as follows. The RuvA-RuvB-RuvC complex processes Holliday junction (HJ) DNA during genetic recombination and DNA repair, while the RuvA-RuvB complex plays an important role in the rescue of blocked DNA replication forks via replication fork reversal (RFR). RuvA specifically binds to HJ cruciform DNA, conferring on it an open structure. The RuvB hexamer acts as an ATP-dependent pump, pulling dsDNA into and through the RuvAB complex. RuvB forms 2 homohexamers on either side of HJ DNA bound by 1 or 2 RuvA tetramers; 4 subunits per hexamer contact DNA at a time. Coordinated motions by a converter formed by DNA-disengaged RuvB subunits stimulates ATP hydrolysis and nucleotide exchange. Immobilization of the converter enables RuvB to convert the ATP-contained energy into a lever motion, pulling 2 nucleotides of DNA out of the RuvA tetramer per ATP hydrolyzed, thus driving DNA branch migration. The RuvB motors rotate together with the DNA substrate, which together with the progressing nucleotide cycle form the mechanistic basis for DNA recombination by continuous HJ branch migration. Branch migration allows RuvC to scan DNA until it finds its consensus sequence, where it cleaves and resolves cruciform DNA. This is Holliday junction branch migration complex subunit RuvB from Pseudomonas putida (strain ATCC 47054 / DSM 6125 / CFBP 8728 / NCIMB 11950 / KT2440).